The chain runs to 2187 residues: Non-reducing polyketide synthase phnA (2187 aa).

The tract at residues 17-255 is N-terminal acylcarrier protein transacylase domain (SAT); it reads LLFGDLSLAH…KYLDIDSPYH (239 aa). Positions 383–819 constitute a Ketosynthase family 3 (KS3) domain; it reads HSKIAIVGYS…GGNTAMLIED (437 aa). Active-site for beta-ketoacyl synthase activity residues include C555, H690, and H735. The interval 926–1226 is malonyl-CoA:ACP transacylase (MAT) domain; it reads RVAFAFTGQG…GMVKGTIDSR (301 aa). S1021 functions as the For acyl/malonyl transferase activity in the catalytic mechanism. Residues 1321-1637 form a product template (PT) domain region; sequence PCAQQIVEEF…PRRALDHLLP (317 aa). The segment at 1324-1458 is N-terminal hotdog fold; it reads QQIVEEFHDS…LDVVLYPGQQ (135 aa). Positions 1324-1633 constitute a PKS/mFAS DH domain; it reads QQIVEEFHDS…FQGVPRRALD (310 aa). H1356 acts as the Proton acceptor; for dehydratase activity in catalysis. Positions 1486–1633 are C-terminal hotdog fold; the sequence is TETHLIKRGM…FQGVPRRALD (148 aa). D1546 functions as the Proton donor; for dehydratase activity in the catalytic mechanism. The span at 1652–1669 shows a compositional bias: low complexity; the sequence is KAPVAAVAPPRTPTKAAP. Residues 1652 to 1681 form a disordered region; that stretch reads KAPVAAVAPPRTPTKAAPQSRQAAPKQKRS. 2 consecutive Carrier domains span residues 1684-1758 and 1796-1874; these read SDVF…SNSD and SSES…YNVM. S1718 is modified (O-(pantetheine 4'-phosphoryl)serine). A disordered region spans residues 1754–1796; sequence LSNSDEDDTPSGDSSTYEDSESQITSPASSVGPETPGGGEFGS. The span at 1757–1774 shows a compositional bias: acidic residues; that stretch reads SDEDDTPSGDSSTYEDSE. S1834 is subject to O-(pantetheine 4'-phosphoryl)serine. Positions 1906–2183 are thioesterase (TE) domain; the sequence is SSLPQATSIL…PEMGEAVAEF (278 aa). S2009 serves as the catalytic For thioesterase activity.

It catalyses the reaction 6 malonyl-CoA + acetyl-CoA + 5 H(+) = 3,6,7,9-tetrahydroxy-3-methyl-2,3-dihydro-1H-naphtho[2,1-b]pyran-1-one + 6 CO2 + 7 CoA + H2O. Its pathway is secondary metabolite biosynthesis. Non-reducing polyketide synthase; part of the gene cluster that mediates the biosynthesis of phenalenones such as herqueinone, compounds that have been reported to treat tumors, bacterial infections and/or mycoses, and rheumatic diseases. The non-reducing polyketide synthase phnA synthesizes the heptaketide backbone and cyclizes it into the angular, hemiketal-containing naphtho-gamma-pyrone prephenalenone. The product template (PT) domain of phnA catalyzes only the C4-C9 aldol condensation, which is unprecedented among known PT domains. The transformation of prephenalenone to phenalenones requires an FAD-dependent monooxygenase phnB, which catalyzes the C2 aromatic hydroxylation of prephenalenone and ring opening of the gamma-pyrone ring simultaneously. Subsequent intramolecular deprotonation of C3 phenolic oxygen accelerates phenalenone ring closure to yield the tricyclic phenalenone core with a C2 hydroxylation. The prenyltransferase phnF further catalyzes reverse C-prenylation of phenalenone by direct electrophilic substitution at C6, or possibly via first a forward O-prenylation of a neighboring phenol in phenalenone, followed by a Claisen rearrangement. The hydroalkoxylation enzyme phnH catalyzes the 5-exo-trig cyclization via acid catalysis after the spontaneous deprotonation of 7-OH, which leads to the formation of the dihydrobenzofuran atrovenetin. Atrovenetin is further converted to deoxyherqueinone by the O-methyltransferase phnC which can methylate C2-OH to stabilize the northern portion of the phenalenone core. Finally, the oxidoreductase phnG converts deoxyherqueinone to herqueinone via C6 hydroxylation. In Penicillium herquei, this protein is Non-reducing polyketide synthase phnA.